The following is a 123-amino-acid chain: Fluoride-specific ion channel FluC (123 aa).

4 helical membrane passes run 5 to 25, 33 to 53, 62 to 82, and 94 to 114; these read VWVA…YKFV, LATF…IGAF, LKLA…TFAA, and ITAF…VALG. Na(+) is bound by residues G72 and S75.

Belongs to the fluoride channel Fluc/FEX (TC 1.A.43) family.

It localises to the cell inner membrane. The enzyme catalyses fluoride(in) = fluoride(out). With respect to regulation, na(+) is not transported, but it plays an essential structural role and its presence is essential for fluoride channel function. Functionally, fluoride-specific ion channel. Important for reducing fluoride concentration in the cell, thus reducing its toxicity. The protein is Fluoride-specific ion channel FluC of Ignicoccus hospitalis (strain KIN4/I / DSM 18386 / JCM 14125).